We begin with the raw amino-acid sequence, 930 residues long: Probable SapB synthase (930 aa).

In terms of domain architecture, Protein kinase spans 256 to 516 (YTVESALHFS…GSTRADETTR (261 aa)). Residues 262–270 (LHFSNGGGV) and K285 each bind ATP. The Proton acceptor role is filled by D395. A helical membrane pass occupies residues 447–467 (YALACLRIVLFLPLTSLLAVD). Residues 501–527 (GSTRVDGSTRADETTRADETTRLDVTT) are compositionally biased toward basic and acidic residues. Disordered regions lie at residues 501 to 558 (GSTR…RDSM) and 911 to 930 (PFLPPPRRSGGPLTRPHQEP). A compositionally biased stretch (low complexity) spans 532 to 546 (APDAARRPAGPVAPV). Over residues 547–556 (RPDDWPRSRD) the composition is skewed to basic and acidic residues.

This sequence in the N-terminal section; belongs to the protein kinase superfamily.

The protein localises to the cell membrane. Required for aerial hyphae formation. Probably involved in processing the precursor of SapB to its mature form. The sequence is that of Probable SapB synthase from Streptomyces coelicolor (strain ATCC BAA-471 / A3(2) / M145).